Here is a 511-residue protein sequence, read N- to C-terminus: Ribonuclease E/G-like protein (511 aa).

The region spanning Ser35 to Arg117 is the S1 motif domain. Mg(2+) is bound by residues Asp296 and Asp339.

It belongs to the RNase E/G family. Requires Mg(2+) as cofactor.

The protein resides in the plastid. The protein localises to the chloroplast stroma. Involved in intercistronic processing of primary transcripts from chloroplast operons. The endonucleolytic activity of the enzyme depends on the number of phosphates at the 5' end, is inhibited by structured RNA, and preferentially cleaves A/U-rich sequences. The protein is Ribonuclease E/G-like protein (rne) of Porphyra purpurea (Red seaweed).